We begin with the raw amino-acid sequence, 497 residues long: 4,4'-diaponeurosporene oxygenase (497 aa).

Val-7–Ile-19 contacts FAD.

It belongs to the carotenoid/retinoid oxidoreductase family. CrtP subfamily. Requires FAD as cofactor.

It carries out the reaction all-trans-4,4'-diaponeurosporene + 2 AH2 + 2 O2 = 4,4'-diaponeurosporenal + 2 A + 3 H2O. It functions in the pathway carotenoid biosynthesis; staphyloxanthin biosynthesis; staphyloxanthin from farnesyl diphosphate: step 3/5. Its function is as follows. Involved in the biosynthesis of the yellow-orange carotenoid staphyloxanthin, which plays a role in the virulence via its protective function against oxidative stress. Catalyzes the oxidation of the terminal methyl side group of 4,4'-diaponeurosporene to form 4,4'-diaponeurosporen-4-al. The chain is 4,4'-diaponeurosporene oxygenase from Staphylococcus aureus (strain bovine RF122 / ET3-1).